Consider the following 167-residue polypeptide: Cytochrome c-type biogenesis protein CcmE (167 aa).

Topologically, residues 1 to 7 are cytoplasmic; it reads MTRKQRR. The helical; Signal-anchor for type II membrane protein transmembrane segment at 8–28 threads the bilayer; that stretch reads LLMIGGAGVVLIVAVGLVLNA. At 29 to 167 the chain is on the periplasmic side; that stretch reads LRDSIVFFST…TSANAAEGGK (139 aa). Heme is bound by residues His122 and Tyr126. The segment covering 137 to 150 has biased composition (basic and acidic residues); the sequence is KDGHWKDDYGKKSP. Positions 137-167 are disordered; it reads KDGHWKDDYGKKSPGETTAGQTSANAAEGGK. The span at 151–161 shows a compositional bias: polar residues; it reads GETTAGQTSAN.

Belongs to the CcmE/CycJ family.

Its subcellular location is the cell inner membrane. Heme chaperone required for the biogenesis of c-type cytochromes. Transiently binds heme delivered by CcmC and transfers the heme to apo-cytochromes in a process facilitated by CcmF and CcmH. In Rhodopseudomonas palustris (strain ATCC BAA-98 / CGA009), this protein is Cytochrome c-type biogenesis protein CcmE.